The primary structure comprises 545 residues: Autoimmune regulator (545 aa).

The region spanning 1-105 (MATDAALRRL…ILDSFPKDVD (105 aa)) is the HSR domain. 2 short sequence motifs (LXXLL motif) span residues 7 to 11 (LRRLL) and 63 to 67 (LSWLL). Disordered stretches follow at residues 101–178 (PKDV…LPLG) and 234–290 (SKFE…SDPQ). Over residues 116-128 (PAVPKALVPPPRL) the composition is skewed to pro residues. Low complexity predominate over residues 140-152 (AAAPAALTPRGTA). Residues 181–280 (IQTMSASVQR…ARLGQQGSVP (100 aa)) form the SAND domain. Interaction with histone H3 not methylated at 'Lys-4' regions lie at residues 295–298 (NEDE), 304–312 (DGGELICCD), and 331–335 (PSGTW). Residues 296 to 343 (EDECAVCRDGGELICCDGCPRAFHLACLSPPLREIPSGTWRCSSCLQA) form a PHD-type 1 zinc finger. The segment at 348–382 (VQPRAEEPRPQEPPVETPLPPGLRSAGEEVRGPPG) is disordered. Residues 358–368 (QEPPVETPLPP) show a composition bias toward pro residues. The short motif at 414–418 (LHPLL) is the LXXLL motif 3 element. A PHD-type 2 zinc finger spans residues 434–475 (CGVCGDGTDVLRCTHCAAAFHWRCHFPAGTSRPGTGLRCRSC). Residues 489-508 (APSPARLAPGPAKDDTASHE) form a disordered region. The short motif at 516 to 520 (LESLL) is the LXXLL motif 4 element.

Homodimer and homotetramer. Interacts with CREBBP. Interacts preferentially with histone H3 that is not methylated at 'Lys-4'. Binds with lower affinity to histone H3 that is monomethylated at 'Lys-4'. Trimethylation of histone H3 at 'Lys-4' or phosphorylation at 'Thr-3' abolish the interaction. Binds with lower affinity to histone H3 that is acetylated at 'Lys-4', or that is acetylated at 'Lys-9' or trimethylated at 'Lys-9'. Binds histone H3 that is dimethylated at 'Arg-2' with very low affinity. Phosphorylated. Phosphorylation could trigger oligomerization. In terms of tissue distribution, widely expressed. Expressed at higher level in thymus (medullary epithelial cells and monocyte-dendritic cells), pancreas, adrenal cortex and testis. Expressed at lower level in the spleen, fetal liver and lymph nodes. In secondary lymphoid organs, expressed in a discrete population of bone marrow-derived toleregenic antigen presenting cells (APCs) called extrathymic AIRE expressing cells (eTAC)(at protein level). Isoform 2 and isoform 3 seem to be less frequently expressed than isoform 1, if at all.

It is found in the nucleus. The protein resides in the cytoplasm. Transcription factor playing an essential role to promote self-tolerance in the thymus by regulating the expression of a wide array of self-antigens that have the commonality of being tissue-restricted in their expression pattern in the periphery, called tissue restricted antigens (TRA). Binds to G-doublets in an A/T-rich environment; the preferred motif is a tandem repeat of 5'-ATTGGTTA-3' combined with a 5'-TTATTA-3' box. Binds to nucleosomes. Binds to chromatin and interacts selectively with histone H3 that is not methylated at 'Lys-4', not phosphorylated at 'Thr-3' and not methylated at 'Arg-2'. Functions as a sensor of histone H3 modifications that are important for the epigenetic regulation of gene expression. Mainly expressed by medullary thymic epithelial cells (mTECs), induces the expression of thousands of tissue-restricted proteins, which are presented on major histocompatibility complex class I (MHC-I) and MHC-II molecules to developing T-cells percolating through the thymic medulla. Also induces self-tolerance through other mechanisms such as the regulation of the mTEC differentiation program. Controls the medullary accumulation of thymic dendritic cells and the development of regulatory T-cell through the regulation of XCL1 expression. Regulates the production of CCR4 and CCR7 ligands in medullary thymic epithelial cells and alters the coordinated maturation and migration of thymocytes. In thimic B-cells, allows the presentation of licensing-dependent endogenous self-anitgen for negative selection. In secondary lymphoid organs, induces functional inactivation of CD4(+) T-cells. Expressed by a distinct bone marrow-derived population, induces self-tolerance through a mechanism that does not require regulatory T-cells and is resitant to innate inflammatory stimuli. In Homo sapiens (Human), this protein is Autoimmune regulator (AIRE).